The following is a 270-amino-acid chain: Putative carbamate hydrolase RutD (270 aa).

The protein belongs to the AB hydrolase superfamily. Hydrolase RutD family.

It catalyses the reaction carbamate + 2 H(+) = NH4(+) + CO2. Its function is as follows. Involved in pyrimidine catabolism. May facilitate the hydrolysis of carbamate, a reaction that can also occur spontaneously. The protein is Putative carbamate hydrolase RutD of Escherichia coli O44:H18 (strain 042 / EAEC).